Here is a 754-residue protein sequence, read N- to C-terminus: Relaxin receptor 2 (754 aa).

Residues Met1–Asn416 lie on the Extracellular side of the membrane. The LDL-receptor class A domain maps to Ser44–Gly81. 3 cysteine pairs are disulfide-bonded: Cys45-Cys58, Cys52-Cys71, and Cys65-Cys80. An N-linked (GlcNAc...) asparagine glycan is attached at Asn54. Residue Asn138 is glycosylated (N-linked (GlcNAc...) asparagine). 10 LRR repeats span residues Asn138 to Lys159, Lys162 to Gly183, Asn186 to Asp207, Gln210 to Gly231, Ser234 to Gln255, Gln258 to Ser279, Ser282 to Ser303, Asn306 to Asp327, Leu330 to Ser351, and Gln354 to Pro375. Asn274 carries N-linked (GlcNAc...) asparagine glycosylation. A glycan (N-linked (GlcNAc...) asparagine) is linked at Asn335. N-linked (GlcNAc...) asparagine glycosylation occurs at Asn378. The chain crosses the membrane as a helical span at residues Ile417–Ile437. Topologically, residues Gly438–Lys455 are cytoplasmic. The helical transmembrane segment at Ile456–Ile476 threads the bilayer. The Extracellular segment spans residues Lys477 to Cys495. A disulfide bridge connects residues Cys495 and Cys573. Residues Arg496–Leu518 traverse the membrane as a helical segment. Residues Glu519–Gln537 are Cytoplasmic-facing. Residues Thr538–Trp558 form a helical membrane-spanning segment. Residues Asn559–Gly592 are Extracellular-facing. Residues Ile593–Phe613 traverse the membrane as a helical segment. Residues Cys614 to Arg639 lie on the Cytoplasmic side of the membrane. A helical membrane pass occupies residues Phe640–Leu660. Topologically, residues Ser661–Thr670 are extracellular. The chain crosses the membrane as a helical span at residues Met671–Tyr691. The Cytoplasmic segment spans residues Thr692–Ser754.

It belongs to the G-protein coupled receptor 1 family. Expressed mainly in the brain, kidney, muscle, testis, thyroid, uterus, peripheral blood cells and bone marrow.

It is found in the cell membrane. Its function is as follows. Receptor for relaxin. The activity of this receptor is mediated by G proteins leading to stimulation of adenylate cyclase and an increase of cAMP. May also be a receptor for Leydig insulin-like peptide (INSL3). In Homo sapiens (Human), this protein is Relaxin receptor 2 (RXFP2).